A 156-amino-acid polypeptide reads, in one-letter code: Methylated-DNA--protein-cysteine methyltransferase (156 aa).

Residue Cys120 is the Nucleophile; methyl group acceptor of the active site.

The protein belongs to the MGMT family.

The protein localises to the cytoplasm. The enzyme catalyses a 6-O-methyl-2'-deoxyguanosine in DNA + L-cysteinyl-[protein] = S-methyl-L-cysteinyl-[protein] + a 2'-deoxyguanosine in DNA. It carries out the reaction a 4-O-methyl-thymidine in DNA + L-cysteinyl-[protein] = a thymidine in DNA + S-methyl-L-cysteinyl-[protein]. In terms of biological role, involved in the cellular defense against the biological effects of O6-methylguanine (O6-MeG) and O4-methylthymine (O4-MeT) in DNA. Repairs the methylated nucleobase in DNA by stoichiometrically transferring the methyl group to a cysteine residue in the enzyme. This is a suicide reaction: the enzyme is irreversibly inactivated. The sequence is that of Methylated-DNA--protein-cysteine methyltransferase from Sulfurisphaera tokodaii (strain DSM 16993 / JCM 10545 / NBRC 100140 / 7) (Sulfolobus tokodaii).